The chain runs to 327 residues: Putative HTH-type transcriptional regulatory protein Mbar_A2318 (327 aa).

One can recognise an HTH cro/C1-type domain in the interval 132-190 (LKKARMGQSMSLGTLASMVGVSRRTISKYEEEGMDASIDVVLQLEDIFGVELAKPINIL). The segment at residues 143-162 (LGTLASMVGVSRRTISKYEE) is a DNA-binding region (H-T-H motif).

In Methanosarcina barkeri (strain Fusaro / DSM 804), this protein is Putative HTH-type transcriptional regulatory protein Mbar_A2318.